The sequence spans 683 residues: C-mannosyltransferase dpy-19 (683 aa).

The next 11 helical transmembrane spans lie at 21–41 (SLYS…VGYI), 167–187 (ITGV…LGVL), 188–208 (VSDS…NHGE), 220–240 (ESFA…VIKY), 267–287 (FAFF…LIPF), 298–318 (IISF…ITAL), 319–339 (YFPS…LSNL), 344–364 (AYVL…KIGL), 413–433 (CGTL…FNFV), 467–487 (FLIM…AALF), and 502–522 (IRVS…IPNI).

The protein belongs to the dpy-19 family. Expressed faintly in neuroblasts QL and QR, more strongly in the neighboring epidermal cells (dorsal hyp7 cells, ventral P cells and lateral V cells), and in dorsal and ventral body muscle cells.

The protein resides in the endoplasmic reticulum membrane. Its function is as follows. C-mannosyltransferase that mediates C-mannosylation of tryptophan residues on target proteins such as unc-5 and mig-21. Mediates the attachment of alpha-mannose in C-C linkage to the C2 of the indole ring of tryptophan. C-mannosylation takes place in the endoplasmic reticulum and frequently found in thrombospondin (TSP) type-1 repeats and in the WSXWS motif of type I cytokine receptors. Required to orient neuroblasts QL and QR correctly on the anterior/posterior (A/P) axis: QL and QR are born in the same A/P position, but polarize and migrate left/right asymmetrically, QL migrates toward the posterior and QR migrates toward the anterior. Required with unc-40 to express mab-5 correctly in the Q cell descendants. The protein is C-mannosyltransferase dpy-19 (dpy-19) of Caenorhabditis elegans.